We begin with the raw amino-acid sequence, 185 residues long: Large ribosomal subunit protein uL6 (185 aa).

Belongs to the universal ribosomal protein uL6 family. In terms of assembly, part of the 50S ribosomal subunit.

In terms of biological role, this protein binds to the 23S rRNA, and is important in its secondary structure. It is located near the subunit interface in the base of the L7/L12 stalk, and near the tRNA binding site of the peptidyltransferase center. The polypeptide is Large ribosomal subunit protein uL6 (Staphylothermus marinus (strain ATCC 43588 / DSM 3639 / JCM 9404 / F1)).